The chain runs to 126 residues: Protein VraC (126 aa).

This chain is Protein VraC, found in Staphylococcus haemolyticus (strain JCSC1435).